Consider the following 624-residue polypeptide: Dihydroxy-acid dehydratase (624 aa).

Aspartate 81 lines the Mg(2+) pocket. Cysteine 122 contributes to the [2Fe-2S] cluster binding site. 2 residues coordinate Mg(2+): aspartate 123 and lysine 124. Lysine 124 bears the N6-carboxylysine mark. A [2Fe-2S] cluster-binding site is contributed by cysteine 195. Residue glutamate 499 participates in Mg(2+) binding. Serine 525 serves as the catalytic Proton acceptor.

This sequence belongs to the IlvD/Edd family. As to quaternary structure, homodimer. [2Fe-2S] cluster is required as a cofactor. It depends on Mg(2+) as a cofactor.

The enzyme catalyses (2R)-2,3-dihydroxy-3-methylbutanoate = 3-methyl-2-oxobutanoate + H2O. It catalyses the reaction (2R,3R)-2,3-dihydroxy-3-methylpentanoate = (S)-3-methyl-2-oxopentanoate + H2O. It participates in amino-acid biosynthesis; L-isoleucine biosynthesis; L-isoleucine from 2-oxobutanoate: step 3/4. Its pathway is amino-acid biosynthesis; L-valine biosynthesis; L-valine from pyruvate: step 3/4. In terms of biological role, functions in the biosynthesis of branched-chain amino acids. Catalyzes the dehydration of (2R,3R)-2,3-dihydroxy-3-methylpentanoate (2,3-dihydroxy-3-methylvalerate) into 2-oxo-3-methylpentanoate (2-oxo-3-methylvalerate) and of (2R)-2,3-dihydroxy-3-methylbutanoate (2,3-dihydroxyisovalerate) into 2-oxo-3-methylbutanoate (2-oxoisovalerate), the penultimate precursor to L-isoleucine and L-valine, respectively. This chain is Dihydroxy-acid dehydratase, found in Shewanella baltica (strain OS185).